The following is a 173-amino-acid chain: Calcineurin subunit B (173 aa).

EF-hand domains are found at residues Asp20 to Pro55, Arg59 to Lys87, Asn89 to Asn124, and Gln130 to Tyr165. Ca(2+)-binding residues include Asp33, Asp35, Ser37, Glu44, Asp65, Asn67, Ser69, Asp71, Glu76, Asp102, Asp104, Asp106, Tyr108, Glu113, Asp143, Asp145, Asp147, Lys149, and Glu154.

The protein belongs to the calcineurin regulatory subunit family. As to quaternary structure, composed of a catalytic subunit (A) and a regulatory subunit (B).

Functionally, regulatory subunit of calcineurin, a calcium-dependent, calmodulin stimulated protein phosphatase. Confers calcium sensitivity. The polypeptide is Calcineurin subunit B (CNB1) (Yarrowia lipolytica (strain CLIB 122 / E 150) (Yeast)).